The chain runs to 154 residues: Superoxide dismutase [Cu-Zn] (154 aa).

Cu cation contacts are provided by His47, His49, and His64. A disulfide bond links Cys58 and Cys147. Positions 64, 72, 81, and 84 each coordinate Zn(2+). His121 lines the Cu cation pocket. Positions 124-137 (TDDLGRGDSEESKK) are enriched in basic and acidic residues. Residues 124-144 (TDDLGRGDSEESKKTGNAGAR) form a disordered region. Arg144 is a substrate binding site.

The protein belongs to the Cu-Zn superoxide dismutase family. In terms of assembly, homodimer. Cu cation serves as cofactor. The cofactor is Zn(2+).

It is found in the cytoplasm. The enzyme catalyses 2 superoxide + 2 H(+) = H2O2 + O2. Its function is as follows. Destroys radicals which are normally produced within the cells and which are toxic to biological systems. The polypeptide is Superoxide dismutase [Cu-Zn] (sodA) (Emericella nidulans (strain FGSC A4 / ATCC 38163 / CBS 112.46 / NRRL 194 / M139) (Aspergillus nidulans)).